We begin with the raw amino-acid sequence, 232 residues long: 2-C-methyl-D-erythritol 4-phosphate cytidylyltransferase (232 aa).

This sequence belongs to the IspD/TarI cytidylyltransferase family. IspD subfamily.

The enzyme catalyses 2-C-methyl-D-erythritol 4-phosphate + CTP + H(+) = 4-CDP-2-C-methyl-D-erythritol + diphosphate. It participates in isoprenoid biosynthesis; isopentenyl diphosphate biosynthesis via DXP pathway; isopentenyl diphosphate from 1-deoxy-D-xylulose 5-phosphate: step 2/6. Catalyzes the formation of 4-diphosphocytidyl-2-C-methyl-D-erythritol from CTP and 2-C-methyl-D-erythritol 4-phosphate (MEP). The sequence is that of 2-C-methyl-D-erythritol 4-phosphate cytidylyltransferase from Shewanella frigidimarina (strain NCIMB 400).